Reading from the N-terminus, the 335-residue chain is Glyceraldehyde-3-phosphate dehydrogenase 1 (335 aa).

NAD(+) contacts are provided by residues 12–13, D34, R78, and S120; that span reads RI. D-glyceraldehyde 3-phosphate contacts are provided by residues 151 to 153 and T182; that span reads SCT. C152 serves as the catalytic Nucleophile. N183 is an NAD(+) binding site. Residues R197, 210-211, and R233 each bind D-glyceraldehyde 3-phosphate; that span reads TG. Residue N315 coordinates NAD(+).

It belongs to the glyceraldehyde-3-phosphate dehydrogenase family. Homotetramer. Interacts with BrxC. Post-translationally, in response to oxidative stress, the active site Cys likely reacts with bacillithiol (BSH) to form mixed disulfides to protect the Cys residue against overoxidation. S-bacillithiolation presumably leads to loss of catalytic activity. Debacillithiolation by monothiol bacilliredoxin BrxC restores the activity.

Its subcellular location is the cytoplasm. The catalysed reaction is D-glyceraldehyde 3-phosphate + phosphate + NAD(+) = (2R)-3-phospho-glyceroyl phosphate + NADH + H(+). It participates in carbohydrate degradation; glycolysis; pyruvate from D-glyceraldehyde 3-phosphate: step 1/5. Functionally, involved in the glycolysis. Catalyzes the oxidative phosphorylation of glyceraldehyde 3-phosphate (G3P) to 1,3-bisphosphoglycerate (BPG) using the cofactor NAD. The first reaction step involves the formation of a hemiacetal intermediate between G3P and a cysteine residue, and this hemiacetal intermediate is then oxidized to a thioester, with concomitant reduction of NAD to NADH. The reduced NADH is then exchanged with the second NAD, and the thioester is attacked by a nucleophilic inorganic phosphate to produce BPG. The polypeptide is Glyceraldehyde-3-phosphate dehydrogenase 1 (Bacillus subtilis (strain 168)).